Reading from the N-terminus, the 528-residue chain is Aspartic proteinase-like protein 1 (528 aa).

The N-terminal stretch at 1–22 (MVSRSAFLLFCVLFLATEETLA) is a signal peptide. Positions 100-449 (HYTWIDIGTP…DRENMKLGWS (350 aa)) constitute a Peptidase A1 domain. Residue aspartate 118 is part of the active site. N-linked (GlcNAc...) asparagine glycans are attached at residues asparagine 193 and asparagine 217. Aspartate 333 is an active-site residue. 2 N-linked (GlcNAc...) asparagine glycosylation sites follow: asparagine 358 and asparagine 391. Positions 451–503 (SKCQEDKIEPPQASPGSTSSPNPLPTDEQQSRGGHAVSPAIAGKTPSKTPSSS) are disordered. Polar residues predominate over residues 464 to 482 (SPGSTSSPNPLPTDEQQSR). Over residues 494 to 503 (KTPSKTPSSS) the composition is skewed to low complexity. Serine 503 carries GPI-anchor amidated serine lipidation. Positions 504-528 (SSYSFSSIMRLFNSLLLLHWLASLM) are cleaved as a propeptide — removed in mature form.

It belongs to the peptidase A1 family.

It is found in the cell membrane. The sequence is that of Aspartic proteinase-like protein 1 from Arabidopsis thaliana (Mouse-ear cress).